Reading from the N-terminus, the 461-residue chain is MRVLIKNGTVVNADGQAKQDLLIESGIVRQLGNNISPQLPYEEIDATGCYVFPGGVDVHTHFNIDVGIARSCDDFFTGTRAAACGGTTTIIDHMGFGPNGCRLRHQLEVYRGYAAHKAVIDYSFHGVIQHINHAILDEIPMMVEEGLSSFKLYLTYQYKLNDDEVLQALRRLHESGALTTVHPENDAAIASKRAEFIAAGLTAPRYHALSRPLECEAEAIARMINLAQIAGNAPLYIVHLSNGLGLDYLRLARANHQPVWVETCPQYLLLDERSYDTEDGMKFILSPPLRNIREQDKLWCGISDGAIDVVATDHCTFSMAQRLQISKGDFSRCPNGLPGVENRMQLLFSSGVMTGRITPERFVELTSAMPARLFGLWPQKGLLAPGSDGDVVIIDPRQSQQIQHRHLHDNADYSPWEGFTCQGAIVRTLSRGETIFCDGTFTGKAGRGRFLRRKPFVPPVL.

His59, His61, and Lys151 together coordinate a divalent metal cation. Lys151 is subject to N6-carboxylysine. Residue Tyr156 participates in substrate binding. The a divalent metal cation site is built by His182 and His239. Residue Ser286 coordinates substrate. A divalent metal cation is bound at residue Asp313. Position 335 (Asn335) interacts with substrate.

It belongs to the metallo-dependent hydrolases superfamily. Hydantoinase/dihydropyrimidinase family. In terms of assembly, homotetramer. A divalent metal cation serves as cofactor. Post-translationally, carboxylation allows a single lysine to coordinate two divalent metal cations.

It catalyses the reaction D-5-phenylhydantoin + H2O = N-carbamoyl-D-phenylglycine + H(+). Functionally, catalyzes the stereospecific hydrolysis of the cyclic amide bond of D-hydantoin derivatives with an aromatic side chains at the 5'-position. Has no activity on dihydropyrimidines. The physiological function is unknown. This Escherichia coli (strain 55989 / EAEC) protein is D-phenylhydantoinase.